We begin with the raw amino-acid sequence, 153 residues long: MPAPAEVQQATLSKFVDAWKRWNADDFIGLWSDSFTFKVLPLSDGKPTRPRDKVAPLYRNLIGTLTDYKLDVKHIVHDASKGKACIYAVASANAPCGDYKNEQAIFITFSESGDKIESMEEMNDNAFRKEWDPKYHAYHGYGQPPTAKAAAGS.

It participates in pigment biosynthesis. Part of the ergochrome gene cluster responsible for the typical purple-black color of the ergot sclerotia. The ergochrome gene cluster produces several ergot pigments including the yellow ergochrome secalonic acid and its derivatives, as well as the red anthraquinones endocrocin and clavorubin. The pathway begins with the synthesis of atrochrysone thioester by the polyketide synthase (PKS) CPUR_05437. The atrochrysone carboxyl ACP thioesterase CPUR_05436 then breaks the thioester bond and releases the atrochrysone carboxylic acid from CPUR_05437. The atrochrysone carboxylic acid is then converted to atrochrysone which is further transformed into emodin anthrone. The next step is performed by the anthrone oxygenase CPUR_05434 that catalyzes the oxidation of emodinanthrone to emodin. Emodin is further modified to yield monodictyphenone via several steps involving CPUR_05427, CPUR_05428, CPUR_05429 and CPUR_05430. The short chain dehydrogenase/reductase CPUR_05418 then catalyzes the C-5 ketoreduction to give the xanthone skeleton of the monomeric units. Ergochromes formation requires further dimerization steps of different xanthone units, probably catalyzed by the cytochrome P450 monooxygenase CPUR_05419. CPUR_05425, CPUR_05426 and CPUR_05431 are unique to Claviceps, thus it is likely that they are involved in further modification of xanthone units or in their dimerization. The yellow ergochromes and the red anthraquinone pigments endocrocin and clavorubin are products from the same PKS derived precursors and the latter are likely shunt products in the pathway of xanthone biosynthesis. It is proposed that atrochrysone carboxylic acid released from the PKS CPUR_05437 can also be converted to endocrocin anthrone which is further oxidized into endocrocin by CPUR_05435. Endocrocin could be then modified to clavorubin, possibly by CPUR_05423 and CPUR_05431. Clavorubin is the principal anthraquinone metabolite produced by the cluster with a much higher yield compared to endocrocin. The polypeptide is Ergochrome gene cluster protein CPUR_05425 (Claviceps purpurea (strain 20.1) (Ergot fungus)).